Reading from the N-terminus, the 253-residue chain is 5'/3'-nucleotidase SurE (253 aa).

A divalent metal cation contacts are provided by D8, D9, S39, and N92.

Belongs to the SurE nucleotidase family. The cofactor is a divalent metal cation.

The protein resides in the cytoplasm. The enzyme catalyses a ribonucleoside 5'-phosphate + H2O = a ribonucleoside + phosphate. The catalysed reaction is a ribonucleoside 3'-phosphate + H2O = a ribonucleoside + phosphate. It catalyses the reaction [phosphate](n) + H2O = [phosphate](n-1) + phosphate + H(+). Nucleotidase with a broad substrate specificity as it can dephosphorylate various ribo- and deoxyribonucleoside 5'-monophosphates and ribonucleoside 3'-monophosphates with highest affinity to 3'-AMP. Also hydrolyzes polyphosphate (exopolyphosphatase activity) with the preference for short-chain-length substrates (P20-25). Might be involved in the regulation of dNTP and NTP pools, and in the turnover of 3'-mononucleotides produced by numerous intracellular RNases (T1, T2, and F) during the degradation of various RNAs. The protein is 5'/3'-nucleotidase SurE of Sodalis glossinidius (strain morsitans).